Reading from the N-terminus, the 248-residue chain is 3-deoxy-manno-octulosonate cytidylyltransferase (248 aa).

It belongs to the KdsB family.

It is found in the cytoplasm. The enzyme catalyses 3-deoxy-alpha-D-manno-oct-2-ulosonate + CTP = CMP-3-deoxy-beta-D-manno-octulosonate + diphosphate. It functions in the pathway nucleotide-sugar biosynthesis; CMP-3-deoxy-D-manno-octulosonate biosynthesis; CMP-3-deoxy-D-manno-octulosonate from 3-deoxy-D-manno-octulosonate and CTP: step 1/1. Its pathway is bacterial outer membrane biogenesis; lipopolysaccharide biosynthesis. In terms of biological role, activates KDO (a required 8-carbon sugar) for incorporation into bacterial lipopolysaccharide in Gram-negative bacteria. The protein is 3-deoxy-manno-octulosonate cytidylyltransferase of Salmonella typhi.